Here is a 525-residue protein sequence, read N- to C-terminus: MSRLKINLDAIERDGASATEGFCADGVRIGSLLVSSEGVRDNQGNLCVLSLSDLEVVPETEGGFLGKGSSGSVRRAVHRGSNKVVALKEIKVTGQTHINEIRRELETLHAGDFATPYLVSFYGAFAHEGSVFIAMEAMDGSLHELYKPVPPPVLACITRLMLKGLTYLHRNRHLIHRDLKPSNVLYNSRTGDIKISDFGVSSNLECTKADAHSFVGTVTYMSPERLRGEHYSYGADIWSLGLVVAELAVGVCPYAGLRGGSSEARFWALLQHLNGDGTALELPPEMDSDLADFISACVVKSPDRRPTCTELLRHPFIVRYTGAAPEAEAKPFSTTTPTVLAPGGLSSLLNRASPAAGSALPLASEGGTPKATSPSPAPVSPLTLSCPLERHDGETDADIADRTVVARWIHAVMKRAVLHKARGHGREELHQEPLAAVSASVATDSGEGGGAAGVSAASLDNGQAAQHREFRAERNLDGHSGDGGSAPVEEDCTAGVRSLTCDDLRWTSTGEPSVNLDDELNRLLF.

The 259-residue stretch at 59–317 folds into the Protein kinase domain; sequence ETEGGFLGKG…CTELLRHPFI (259 aa). ATP is bound by residues 65–73 and Lys88; that span reads LGKGSSGSV. The active-site Proton acceptor is Asp178. Residues 358 to 367 are compositionally biased toward low complexity; it reads SALPLASEGG. 2 disordered regions span residues 358-392 and 438-468; these read SALPLASEGGTPKATSPSPAPVSPLTLSCPLERHD and SASVATDSGEGGGAAGVSAASLDNGQAAQHR.

The protein belongs to the protein kinase superfamily. STE Ser/Thr protein kinase family. MAP kinase kinase subfamily. Mg(2+) serves as cofactor.

The catalysed reaction is L-tyrosyl-[protein] + ATP = O-phospho-L-tyrosyl-[protein] + ADP + H(+). The enzyme catalyses L-seryl-[protein] + ATP = O-phospho-L-seryl-[protein] + ADP + H(+). It catalyses the reaction L-threonyl-[protein] + ATP = O-phospho-L-threonyl-[protein] + ADP + H(+). In terms of biological role, protein kinase which phosphorylates and activates MPK4 in vitro. This Leishmania mexicana protein is Mitogen-activated protein kinase kinase 5.